We begin with the raw amino-acid sequence, 179 residues long: Large ribosomal subunit protein uL5 (179 aa).

Belongs to the universal ribosomal protein uL5 family. Part of the 50S ribosomal subunit; part of the 5S rRNA/L5/L18/L25 subcomplex. Contacts the 5S rRNA and the P site tRNA. Forms a bridge to the 30S subunit in the 70S ribosome.

In terms of biological role, this is one of the proteins that bind and probably mediate the attachment of the 5S RNA into the large ribosomal subunit, where it forms part of the central protuberance. In the 70S ribosome it contacts protein S13 of the 30S subunit (bridge B1b), connecting the 2 subunits; this bridge is implicated in subunit movement. Contacts the P site tRNA; the 5S rRNA and some of its associated proteins might help stabilize positioning of ribosome-bound tRNAs. The protein is Large ribosomal subunit protein uL5 of Halalkalibacterium halodurans (strain ATCC BAA-125 / DSM 18197 / FERM 7344 / JCM 9153 / C-125) (Bacillus halodurans).